The chain runs to 426 residues: Serine--tRNA ligase (426 aa).

230 to 232 contacts L-serine; sequence TSE. Residue 261-263 participates in ATP binding; that stretch reads RSE. E284 provides a ligand contact to L-serine. Residue 348 to 351 coordinates ATP; that stretch reads EISS. S384 contacts L-serine.

Belongs to the class-II aminoacyl-tRNA synthetase family. Type-1 seryl-tRNA synthetase subfamily. As to quaternary structure, homodimer. The tRNA molecule binds across the dimer.

Its subcellular location is the cytoplasm. It catalyses the reaction tRNA(Ser) + L-serine + ATP = L-seryl-tRNA(Ser) + AMP + diphosphate + H(+). The enzyme catalyses tRNA(Sec) + L-serine + ATP = L-seryl-tRNA(Sec) + AMP + diphosphate + H(+). The protein operates within aminoacyl-tRNA biosynthesis; selenocysteinyl-tRNA(Sec) biosynthesis; L-seryl-tRNA(Sec) from L-serine and tRNA(Sec): step 1/1. Catalyzes the attachment of serine to tRNA(Ser). Is also able to aminoacylate tRNA(Sec) with serine, to form the misacylated tRNA L-seryl-tRNA(Sec), which will be further converted into selenocysteinyl-tRNA(Sec). The polypeptide is Serine--tRNA ligase (Sphingopyxis alaskensis (strain DSM 13593 / LMG 18877 / RB2256) (Sphingomonas alaskensis)).